We begin with the raw amino-acid sequence, 585 residues long: Testis-specific serine kinase substrate (585 aa).

Over residues 91-108 (EPDSSGTDSTTEDSGPLA) the composition is skewed to low complexity. The disordered stretch occupies residues 91–126 (EPDSSGTDSTTEDSGPLALPGPPASPTTPWAPEDPD). S224, S281, and S309 each carry phosphoserine. Disordered stretches follow at residues 262 to 309 (SRHG…PSLS) and 559 to 585 (LEGS…GSEQ).

In terms of processing, phosphorylated on serine residue(s) by STK22A/TSSK1 and STK22B/TSSK2.

It is found in the cytoplasm. Its subcellular location is the cytoskeleton. The protein resides in the microtubule organizing center. The protein localises to the centrosome. It localises to the centriole. May play a role in testicular physiology, most probably in the process of spermatogenesis or spermatid development. The sequence is that of Testis-specific serine kinase substrate (Tsks) from Rattus norvegicus (Rat).